The primary structure comprises 273 residues: NH(3)-dependent NAD(+) synthetase (273 aa).

Residue Gly45–Ser52 participates in ATP binding. Asp51 lines the Mg(2+) pocket. Position 139 (Arg139) interacts with deamido-NAD(+). Thr159 serves as a coordination point for ATP. Residue Glu164 coordinates Mg(2+). 2 residues coordinate deamido-NAD(+): Lys172 and Asp179. ATP contacts are provided by Lys188 and Thr210. His259–Lys260 contacts deamido-NAD(+).

Belongs to the NAD synthetase family. As to quaternary structure, homodimer.

The catalysed reaction is deamido-NAD(+) + NH4(+) + ATP = AMP + diphosphate + NAD(+) + H(+). Its pathway is cofactor biosynthesis; NAD(+) biosynthesis; NAD(+) from deamido-NAD(+) (ammonia route): step 1/1. In terms of biological role, catalyzes the ATP-dependent amidation of deamido-NAD to form NAD. Uses ammonia as a nitrogen source. The protein is NH(3)-dependent NAD(+) synthetase of Bacillus pumilus (strain SAFR-032).